A 683-amino-acid polypeptide reads, in one-letter code: THO complex subunit 5 homolog (683 aa).

Residues 1 to 42 (MSSESSKKRKPKVIRSDGTPTEGKRNRSDTEQEGKYYSEEAE) form a disordered region. Ser2 is modified (N-acetylserine). The interaction with CSF1R stretch occupies residues 2 to 144 (SSESSKKRKP…YEVMHLQKEI (143 aa)). Positions 2–199 (SSESSKKRKP…RLDWELEQRK (198 aa)) are interaction with THOC7. Phosphoserine is present on residues Ser5 and Ser6. The Nuclear localization signal signature appears at 7-10 (KKRK). A compositionally biased stretch (basic and acidic residues) spans 22–42 (EGKRNRSDTEQEGKYYSEEAE). The stretch at 81 to 247 (AIEIEERRIQ…QASLPVQEYL (167 aa)) forms a coiled coil. A Glycyl lysine isopeptide (Lys-Gly) (interchain with G-Cter in SUMO2) cross-link involves residue Lys153. Position 225 is a phosphotyrosine (Tyr225). Residues 247 to 683 (LFMPFDQAHK…NHPQGFFSHR (437 aa)) form a tandem RWD domains region. Positions 301–336 (FKPPEDSQDDESDSDAEEEQTTKRRRPTLGVQLDDK) are disordered. The segment covering 306–319 (DSQDDESDSDAEEE) has biased composition (acidic residues). 3 positions are modified to phosphoserine: Ser307, Ser312, and Ser314. Position 328 is a phosphothreonine (Thr328).

Belongs to the THOC5 family. In terms of assembly, component of the THO subcomplex, which is composed of THOC1, THOC2, THOC3, THOC5, THOC6 and THOC7. The THO subcomplex interacts with DDX39B to form the THO-DDX39B complex which multimerizes into a 28-subunit tetrameric assembly. Component of the transcription/export (TREX) complex at least composed of ALYREF/THOC4, DDX39B, SARNP/CIP29, CHTOP and the THO subcomplex; in the complex interacts with THOC1, THOC2, THOC5, THOC6 and THOC7; forms a coiled-coil dimer with THOC7; together with THOC6 and THOC7, plays a key structural role in the oligomerization of the THO-DDX39B complex. TREX seems to have a dynamic structure involving ATP-dependent remodeling. Interacts (via N-terminus) with the NTF2 domain of NXF1. Interacts with phosphorylated CSF1R. Forms a complex with CEBPB. Interacts with CPSF6; indicative for an association with the cleavage factor Im (CFIm) complex. Interacts with THOC1. Interacts with LUZP4. Interacts with NCBP3. Phosphorylated on tyrosine upon binding to activated CSF1R; which causes a dissociation of the two proteins. Phosphorylation on Ser-5 and/or Ser-6 is required for nuclear export. Phosphorylated on Thr-328 in insulin-stimulated adipocytes. In terms of tissue distribution, ubiquitously expressed, with highest levels in testis, liver and heart.

It is found in the nucleus. The protein resides in the cytoplasm. Functionally, component of the THO subcomplex of the TREX complex which is thought to couple mRNA transcription, processing and nuclear export, and which specifically associates with spliced mRNA and not with unspliced pre-mRNA. Plays a key structural role in the oligomerization of the THO-DDX39B complex. TREX is recruited to spliced mRNAs by a transcription-independent mechanism, binds to mRNA upstream of the exon-junction complex (EJC) and is recruited in a splicing- and cap-dependent manner to a region near the 5' end of the mRNA where it functions in mRNA export to the cytoplasm via the TAP/NXF1 pathway. THOC5 in conjunction with ALYREF/THOC4 functions in NXF1-NXT1 mediated nuclear export of HSP70 mRNA; both proteins enhance the RNA binding activity of NXF1 and are required for NXF1 localization to the nuclear rim. Involved in transcription elongation and genome stability. Involved in alternative polyadenylation site choice by recruiting CPSF6 to 5' region of target genes; probably mediates association of the TREX and CFIm complexes. Its function is as follows. Regulates the expression of myeloid transcription factors CEBPA, CEBPB and GAB2 by enhancing the levels of phosphatidylinositol 3,4,5-trisphosphate. May be involved in the differentiation of granulocytes and adipocytes. Essential for hematopoietic primitive cell survival and plays an integral role in monocytic development. This Mus musculus (Mouse) protein is THO complex subunit 5 homolog (Thoc5).